A 346-amino-acid polypeptide reads, in one-letter code: MASIILINFSETDTLHLGSVNDHIMPRIGYTILSIIMALSSTFGIILNMVVIIVTVRYKQLRQPLNYALVNLAVADLGCPVFGGLLTAVTNAMGYFSLGRVGCVLEGFAVAFFGIAGLCSVAVIAVDRYMVVCRPLGAVMFQTKHALAGVVFSWVWSFIWNTPPLFGWGSYQLEGVMTSCAPNWYRRDPVNVSYILCYFMLCFALPFATIIFSYMHLLHTLWQVAKLQVADSGSTAKVEVQVARMVVIMVMAFLLTWLPYAAFALTVIIDSNIYINPVIGTIPAYLAKSSTVFNPIIYIFMNRQFRDYALPCLLCGKNPWAAKEGRDSDTNTLTTTVSKNTSVSPL.

The Extracellular portion of the chain corresponds to 1 to 29 (MASIILINFSETDTLHLGSVNDHIMPRIG). N-linked (GlcNAc...) asparagine glycosylation occurs at Asn-8. A helical transmembrane segment spans residues 30 to 54 (YTILSIIMALSSTFGIILNMVVIIV). Topologically, residues 55–66 (TVRYKQLRQPLN) are cytoplasmic. A helical transmembrane segment spans residues 67–91 (YALVNLAVADLGCPVFGGLLTAVTN). At 92–106 (AMGYFSLGRVGCVLE) the chain is on the extracellular side. Cys-103 and Cys-180 are oxidised to a cystine. A helical transmembrane segment spans residues 107–126 (GFAVAFFGIAGLCSVAVIAV). Topologically, residues 127-145 (DRYMVVCRPLGAVMFQTKH) are cytoplasmic. The helical transmembrane segment at 146-169 (ALAGVVFSWVWSFIWNTPPLFGWG) threads the bilayer. Residues 170-193 (SYQLEGVMTSCAPNWYRRDPVNVS) lie on the Extracellular side of the membrane. Residue Asn-191 is glycosylated (N-linked (GlcNAc...) asparagine). A helical membrane pass occupies residues 194–221 (YILCYFMLCFALPFATIIFSYMHLLHTL). Topologically, residues 222 to 244 (WQVAKLQVADSGSTAKVEVQVAR) are cytoplasmic. The chain crosses the membrane as a helical span at residues 245-268 (MVVIMVMAFLLTWLPYAAFALTVI). Residues 269–276 (IDSNIYIN) are Extracellular-facing. Residues 277-301 (PVIGTIPAYLAKSSTVFNPIIYIFM) form a helical membrane-spanning segment. An N6-(retinylidene)lysine modification is found at Lys-288. The Cytoplasmic portion of the chain corresponds to 302–346 (NRQFRDYALPCLLCGKNPWAAKEGRDSDTNTLTTTVSKNTSVSPL). Residue Cys-315 is the site of S-palmitoyl cysteine attachment. The interval 325 to 346 (GRDSDTNTLTTTVSKNTSVSPL) is disordered. Low complexity predominate over residues 330–346 (TNTLTTTVSKNTSVSPL).

It belongs to the G-protein coupled receptor 1 family. Opsin subfamily. In terms of processing, phosphorylated on some or all of the serine and threonine residues present in the C-terminal region. Parapineal organ.

It localises to the membrane. This Ictalurus punctatus (Channel catfish) protein is Parapinopsin.